We begin with the raw amino-acid sequence, 377 residues long: Pseudouridylate synthase RPUSD4, mitochondrial (377 aa).

A mitochondrion-targeting transit peptide spans 1–15 (MAAPRWSASGPWIRG). A coiled-coil region spans residues 36 to 62 (AASTAINAQRLAEKLRAQKREQDTKKE). Residue Asp153 is part of the active site.

It belongs to the pseudouridine synthase RluA family. Interacts with 16S mt-rRNA, mt-tRNA(Phe) and mt-tRNA(Met). Forms a regulatory protein-RNA complex, consisting of RCC1L, NGRN, RPUSD3, RPUSD4, TRUB2, FASTKD2 and 16S mt-rRNA.

Its subcellular location is the mitochondrion matrix. It is found in the nucleus. The protein localises to the cytoplasm. The enzyme catalyses uridine in 5S rRNA = pseudouridine in 5S rRNA. It catalyses the reaction a uridine in tRNA = a pseudouridine in tRNA. The catalysed reaction is a uridine in mRNA = a pseudouridine in mRNA. Catalyzes uridine to pseudouridine isomerization (pseudouridylation) of different mitochondrial RNA substrates. Acts on position 1397 in 16S mitochondrial ribosomal RNA (16S mt-rRNA). This modification is required for the assembly of 16S mt-rRNA into a functional mitochondrial ribosome. As a component of a functional protein-RNA module, consisting of RCC1L, NGRN, RPUSD3, RPUSD4, TRUB2, FASTKD2 and 16S mt-rRNA, controls 16S mt-rRNA abundance and is required for intra-mitochondrial translation. Acts on position 39 in mitochondrial tRNA(Phe). Also catalyzes pseudouridylation of mRNAs in nucleus: acts as a regulator of pre-mRNA splicing by mediating pseudouridylation of pre-mRNAs at locations associated with alternatively spliced regions. Pseudouridylation of pre-mRNAs near splice sites directly regulates mRNA splicing and mRNA 3'-end processing. In Homo sapiens (Human), this protein is Pseudouridylate synthase RPUSD4, mitochondrial.